Here is a 357-residue protein sequence, read N- to C-terminus: Peptide chain release factor 1 (357 aa).

Gln232 is subject to N5-methylglutamine. Residues 281–305 (DRQHNEMAADRRSQVGSGDRSERIR) show a composition bias toward basic and acidic residues. The disordered stretch occupies residues 281-309 (DRQHNEMAADRRSQVGSGDRSERIRTYNF).

Belongs to the prokaryotic/mitochondrial release factor family. Methylated by PrmC. Methylation increases the termination efficiency of RF1.

It localises to the cytoplasm. Functionally, peptide chain release factor 1 directs the termination of translation in response to the peptide chain termination codons UAG and UAA. The protein is Peptide chain release factor 1 of Nitratidesulfovibrio vulgaris (strain DSM 19637 / Miyazaki F) (Desulfovibrio vulgaris).